We begin with the raw amino-acid sequence, 276 residues long: Protease HtpX homolog (276 aa).

A helical transmembrane segment spans residues 14–34 (IVLFALIGQALGGTGGMLLAF). Residue H130 coordinates Zn(2+). The active site involves E131. H134 serves as a coordination point for Zn(2+). A run of 2 helical transmembrane segments spans residues 145–165 (VAATLAGAITMLSRFALFFGG) and 171–191 (LVSLLMMILAPMAAMLIQSAI). E196 is a Zn(2+) binding site.

It belongs to the peptidase M48B family. Zn(2+) serves as cofactor.

It localises to the cell inner membrane. The sequence is that of Protease HtpX homolog from Salinibacter ruber (strain DSM 13855 / M31).